We begin with the raw amino-acid sequence, 95 residues long: uncharacterized protein (95 aa).

This is an uncharacterized protein from Autographa californica nuclear polyhedrosis virus (AcMNPV).